The sequence spans 194 residues: Recombination protein RecR (194 aa).

Residues 53-68 form a C4-type zinc finger; the sequence is CEICFNLDVTSPCSIC. The Toprim domain maps to 76–171; it reads SLLCIVEELG…KVTRLACGIP (96 aa).

It belongs to the RecR family.

In terms of biological role, may play a role in DNA repair. It seems to be involved in an RecBC-independent recombinational process of DNA repair. It may act with RecF and RecO. This chain is Recombination protein RecR, found in Anaplasma phagocytophilum (strain HZ).